The primary structure comprises 2566 residues: Highly reducing polyketide synthase verA (2566 aa).

Residues 3-440 (PEPIAIIGTG…GTNAHAILES (438 aa)) form the Ketosynthase family 3 (KS3) domain. Residues 35-61 (VASEPPSTRFDNRSFYDPDPSHPGTTN) form a disordered region. Residues 44 to 54 (FDNRSFYDPDP) are compositionally biased toward basic and acidic residues. Residues Cys176, His316, and His360 each act as for beta-ketoacyl synthase activity in the active site. The tract at residues 554–880 (IFTGQGAQWP…IGLSNRGASG (327 aa)) is malonyl-CoA:ACP transacylase (MAT) domain. Residue Ser648 is the For malonyltransferase activity of the active site. The tract at residues 950–1081 (HPLLGSLEAD…GKLLICWGNP (132 aa)) is N-terminal hotdog fold. Residues 950–1246 (HPLLGSLEAD…EGVHISPLGP (297 aa)) form a dehydratase (DH) domain region. In terms of domain architecture, PKS/mFAS DH spans 950-1250 (HPLLGSLEAD…ISPLGPPDRQ (301 aa)). The Proton acceptor; for dehydratase activity role is filled by His982. The interval 1096 to 1250 (AGAVDIKDFY…ISPLGPPDRQ (155 aa)) is C-terminal hotdog fold. Asp1156 (proton donor; for dehydratase activity) is an active-site residue. The segment at 1386 to 1581 (DVLSRFYKED…TGFGGIDTIT (196 aa)) is methyltransferase (CMet) domain. The interval 2127-2294 (KTYLLVGMTG…RRARNIVGSI (168 aa)) is ketoreductase (KR) domain. The 79-residue stretch at 2411-2489 (EAAEIVAAGL…ALTADSVSKL (79 aa)) folds into the Carrier domain. The residue at position 2449 (Ser2449) is an O-(pantetheine 4'-phosphoryl)serine. The interval 2505–2540 (KDVSGLTSPPEVPSDASRSSVSSGMDEIVTPESPSF) is disordered. Residues 2518-2527 (SDASRSSVSS) show a composition bias toward low complexity.

Pantetheine 4'-phosphate serves as cofactor.

The protein operates within secondary metabolite biosynthesis; terpenoid biosynthesis. It participates in mycotoxin biosynthesis. In terms of biological role, highly reducing polyketide synthase (HR-PKS); part of the gene cluster that mediates the biosynthesis of the neurotoxin verrucosidin, a methylated alpha-pyrone polyketide that inhibits oxidative phosphorylation in mitochondria and thereby causes neurological diseases. The carbon backbone of verrucosidin is synthesized by the HR-PKS verA, and further modified by the other verrucodidin cluster enzymes. This chain is Highly reducing polyketide synthase verA, found in Penicillium polonicum.